A 325-amino-acid chain; its full sequence is Glutarate 2-hydroxylase (325 aa).

Positions 160, 162, and 292 each coordinate Fe cation.

Belongs to the glutarate hydroxylase family. In terms of assembly, homotetramer. Fe(2+) serves as cofactor.

It catalyses the reaction glutarate + 2-oxoglutarate + O2 = (S)-2-hydroxyglutarate + succinate + CO2. It functions in the pathway amino-acid degradation. Its function is as follows. Acts as an alpha-ketoglutarate-dependent dioxygenase catalyzing hydroxylation of glutarate (GA) to L-2-hydroxyglutarate (L2HG). Functions in a L-lysine degradation pathway that proceeds via cadaverine, glutarate and L-2-hydroxyglutarate. This is Glutarate 2-hydroxylase from Salmonella typhimurium (strain SL1344).